The following is a 193-amino-acid chain: MEKKQSILSPIIRITFTFLVLCGLVYPLIVTGIAQAVMKDNADGSLIYNDKNEVIGSKLIGQNFTDPRYFQGRVSSIEYKAEASGSNNYAPSNPDLEKRVEKSIEEWKKQNRAVPVTEVPIDLVTNSGSGLDPDISPQAASVQVDRISKLTNITKETLNQLIKDQTEGAALGLFGENRVNVLKLNLELQKLLK.

The chain crosses the membrane as a helical span at residues 14-34; the sequence is ITFTFLVLCGLVYPLIVTGIA.

It belongs to the KdpC family. The system is composed of three essential subunits: KdpA, KdpB and KdpC.

Its subcellular location is the cell membrane. Part of the high-affinity ATP-driven potassium transport (or Kdp) system, which catalyzes the hydrolysis of ATP coupled with the electrogenic transport of potassium into the cytoplasm. This subunit acts as a catalytic chaperone that increases the ATP-binding affinity of the ATP-hydrolyzing subunit KdpB by the formation of a transient KdpB/KdpC/ATP ternary complex. This Bacillus cereus (strain G9842) protein is Potassium-transporting ATPase KdpC subunit.